The following is a 434-amino-acid chain: Na(+)/H(+) antiporter NhaA 1 (434 aa).

11 helical membrane-spanning segments follow: residues 34-54 (GLLL…PWSA), 73-93 (LTLG…VAGL), 111-131 (ALPV…YVLW), 141-161 (GWAI…AVIS), 171-191 (FLLT…ALFY), 194-214 (ELHL…ALLV), 233-253 (VLVH…GFAV), 278-298 (SAGL…VGGF), 313-333 (VVTG…WLLA), 346-366 (WVDV…SLLI), and 380-400 (HVKV…TGVL).

It belongs to the NhaA Na(+)/H(+) (TC 2.A.33) antiporter family.

It localises to the cell membrane. The catalysed reaction is Na(+)(in) + 2 H(+)(out) = Na(+)(out) + 2 H(+)(in). Na(+)/H(+) antiporter that extrudes sodium in exchange for external protons. The chain is Na(+)/H(+) antiporter NhaA 1 from Nocardioides sp. (strain ATCC BAA-499 / JS614).